Here is a 195-residue protein sequence, read N- to C-terminus: Large ribosomal subunit protein bL25 (195 aa).

It belongs to the bacterial ribosomal protein bL25 family. CTC subfamily. As to quaternary structure, part of the 50S ribosomal subunit; part of the 5S rRNA/L5/L18/L25 subcomplex. Contacts the 5S rRNA. Binds to the 5S rRNA independently of L5 and L18.

Its function is as follows. This is one of the proteins that binds to the 5S RNA in the ribosome where it forms part of the central protuberance. In Geobacter metallireducens (strain ATCC 53774 / DSM 7210 / GS-15), this protein is Large ribosomal subunit protein bL25.